We begin with the raw amino-acid sequence, 213 residues long: Dimethylamine corrinoid protein 1 (213 aa).

The B12-binding N-terminal domain maps to 1–90 (MSKEELLQEL…LMPEGSASSK (90 aa)). One can recognise a B12-binding domain in the interval 91–213 (MGVIVNGTVE…AVAKAKELLA (123 aa)). Residue His104 coordinates methylcob(III)alamin.

It belongs to the methylamine corrinoid protein family.

It participates in one-carbon metabolism; methanogenesis from dimethylamine. Functionally, acts as a methyl group carrier between MtbB and MtbA. The chain is Dimethylamine corrinoid protein 1 (mtbC1) from Methanosarcina acetivorans (strain ATCC 35395 / DSM 2834 / JCM 12185 / C2A).